Consider the following 280-residue polypeptide: NLP effector protein Pc553546 (280 aa).

The first 19 residues, 1-19, serve as a signal peptide directing secretion; that stretch reads MNLVAALVLCFALLSSVRG. Positions 123 to 129 match the Hepta-peptide GHRHDWE motif motif; sequence AGRHDWA. N-linked (GlcNAc...) asparagine glycans are attached at residues Asn142 and Asn209.

This sequence belongs to the Necrosis inducing protein (NPP1) family.

The protein resides in the secreted. Functionally, secreted effector that contributes strongly to virulence during infection by P.capsici. The protein is NLP effector protein Pc553546 of Phytophthora capsici.